Reading from the N-terminus, the 87-residue chain is Small ribosomal subunit protein uS15c (87 aa).

It belongs to the universal ribosomal protein uS15 family. In terms of assembly, part of the 30S ribosomal subunit.

Its subcellular location is the plastid. It is found in the chloroplast. The polypeptide is Small ribosomal subunit protein uS15c (rps15) (Nymphaea alba (White water-lily)).